The chain runs to 311 residues: Aquaporin NIP3-1 (311 aa).

The tract at residues Met-1 to Phe-34 is disordered. Residues Gly-20–Phe-34 show a composition bias toward low complexity. 2 consecutive transmembrane segments (helical) span residues Leu-85 to Val-105 and Gly-111 to Leu-131. An NPA 1 motif is present at residues Asn-142–Ser-144. 3 consecutive transmembrane segments (helical) span residues Leu-158–Leu-178, Ala-202–Thr-222, and Ala-226–Ala-246. An NPA 2 motif is present at residues Asn-255–Val-257. Residues Trp-273–Val-293 form a helical membrane-spanning segment.

It belongs to the MIP/aquaporin (TC 1.A.8) family. NIP (TC 1.A.8.12) subfamily. As to expression, expressed in roots and leaves.

The protein resides in the membrane. Functionally, aquaporins facilitate the transport of water and small neutral solutes across cell membranes. The chain is Aquaporin NIP3-1 (NIP3-1) from Oryza sativa subsp. japonica (Rice).